The following is a 308-amino-acid chain: tRNA dimethylallyltransferase (308 aa).

An ATP-binding site is contributed by 9–16; the sequence is GPTAVGKT. Substrate is bound at residue 11-16; it reads TAVGKT. The interval 34 to 37 is interaction with substrate tRNA; the sequence is DSMQ.

Belongs to the IPP transferase family. Monomer. Mg(2+) serves as cofactor.

It catalyses the reaction adenosine(37) in tRNA + dimethylallyl diphosphate = N(6)-dimethylallyladenosine(37) in tRNA + diphosphate. In terms of biological role, catalyzes the transfer of a dimethylallyl group onto the adenine at position 37 in tRNAs that read codons beginning with uridine, leading to the formation of N6-(dimethylallyl)adenosine (i(6)A). In Lactobacillus delbrueckii subsp. bulgaricus (strain ATCC 11842 / DSM 20081 / BCRC 10696 / JCM 1002 / NBRC 13953 / NCIMB 11778 / NCTC 12712 / WDCM 00102 / Lb 14), this protein is tRNA dimethylallyltransferase.